A 388-amino-acid chain; its full sequence is Na(+)/H(+) antiporter NhaA (388 aa).

Helical transmembrane passes span 13-33 (AAGGIILIVAAIIALIMANTP), 36-56 (GIYHAFLNLPVMVKVSSLEIA), 59-79 (LLLWINDGLMAIFFLVVGLEV), 95-115 (VFPAIAALGGMLAPALIYLMF), 125-145 (GWAIPAATDIAFALGVMALLG), 154-174 (VFLLALAIIDDLGVIVIIALF), 179-199 (VSMAALGVAAASIAVLAFMNW), 213-233 (LVLWVAILKSGVHATLAGVII), 259-279 (VAFLILPLFAFANAGVSLQGV), 287-307 (LLPVGIAAGLFIGKPLGIFTF), 328-348 (VFAVSVLCGIGFTMSIFIASL), and 363-383 (LGILIGSTTAAVVGYGLLRMS).

Belongs to the NhaA Na(+)/H(+) (TC 2.A.33) antiporter family.

It localises to the cell inner membrane. The enzyme catalyses Na(+)(in) + 2 H(+)(out) = Na(+)(out) + 2 H(+)(in). Na(+)/H(+) antiporter that extrudes sodium in exchange for external protons. This is Na(+)/H(+) antiporter NhaA from Serratia proteamaculans (strain 568).